Here is a 213-residue protein sequence, read N- to C-terminus: THAP domain-containing protein 1 (213 aa).

The THAP-type zinc-finger motif lies at 1–81 (MVQSCSAYGC…LKENAVPTIF (81 aa)). Positions 134 to 137 (DHNY) match the HCFC1-binding motif (HBM) motif. Positions 139 to 185 (VEDTMHQRKRIHQLEQQVEKLRKKLKTAQQRCRRQERQLEKLKEVVH) are involved in homodimer formation. Residues 139-190 (VEDTMHQRKRIHQLEQQVEKLRKKLKTAQQRCRRQERQLEKLKEVVHFQKEK) adopt a coiled-coil conformation.

The protein belongs to the THAP1 family. Homodimer. Interacts with PAWR. Component of a THAP1/THAP3-HCFC1-OGT complex that contains, either THAP1 or THAP3, HCFC1 and OGT. Interacts with OGT. Interacts (via the HBM) with HCFC1 (via the Kelch-repeat domain); the interaction recruits HCFC1 to the RRM1 promoter. As to expression, highly expressed in heart, skeletal muscle, kidney and liver. Weaker expression in brain and placenta.

Its subcellular location is the nucleus. The protein resides in the nucleoplasm. It is found in the PML body. Its function is as follows. DNA-binding transcription regulator that regulates endothelial cell proliferation and G1/S cell-cycle progression. Specifically binds the 5'-[AT]NTNN[GT]GGCA[AGT]-3' core DNA sequence and acts by modulating expression of pRB-E2F cell-cycle target genes, including RRM1. Component of a THAP1/THAP3-HCFC1-OGT complex that is required for the regulation of the transcriptional activity of RRM1. May also have pro-apoptotic activity by potentiating both serum-withdrawal and TNF-induced apoptosis. The sequence is that of THAP domain-containing protein 1 (THAP1) from Homo sapiens (Human).